The chain runs to 361 residues: Phospho-N-acetylmuramoyl-pentapeptide-transferase (361 aa).

The next 10 membrane-spanning stretches (helical) occupy residues 28 to 48 (LAIIITLSLSFITGPILIKFL), 74 to 94 (TMGGIMIILSSCLSTLLLADL), 99 to 119 (IWITLFGFISFGIIGFMDDYA), 133 to 153 (SKLLLQGIISLIICILLEYLD), 168 to 188 (LSLDLGYFYIVFAIFVIVGSS), 203 to 223 (VPIAFTAGSFALISYLVGNLI), 236 to 256 (TGELTVLCAGLVGSCLGFLWF), 263 to 283 (VFMGDTGSLSLGGVLGIISVI), 288 to 308 (IVLAIVGGLFVIETASVILQV), and 338 to 358 (KVVIRFWIISVIFALIGLSSL).

Belongs to the glycosyltransferase 4 family. MraY subfamily. Requires Mg(2+) as cofactor.

The protein resides in the cell inner membrane. The catalysed reaction is UDP-N-acetyl-alpha-D-muramoyl-L-alanyl-gamma-D-glutamyl-meso-2,6-diaminopimeloyl-D-alanyl-D-alanine + di-trans,octa-cis-undecaprenyl phosphate = di-trans,octa-cis-undecaprenyl diphospho-N-acetyl-alpha-D-muramoyl-L-alanyl-D-glutamyl-meso-2,6-diaminopimeloyl-D-alanyl-D-alanine + UMP. It functions in the pathway cell wall biogenesis; peptidoglycan biosynthesis. Catalyzes the initial step of the lipid cycle reactions in the biosynthesis of the cell wall peptidoglycan: transfers peptidoglycan precursor phospho-MurNAc-pentapeptide from UDP-MurNAc-pentapeptide onto the lipid carrier undecaprenyl phosphate, yielding undecaprenyl-pyrophosphoryl-MurNAc-pentapeptide, known as lipid I. In Rickettsia felis (strain ATCC VR-1525 / URRWXCal2) (Rickettsia azadi), this protein is Phospho-N-acetylmuramoyl-pentapeptide-transferase.